Consider the following 118-residue polypeptide: NADH-ubiquinone oxidoreductase chain 3 (118 aa).

3 helical membrane passes run 6 to 26, 62 to 82, and 87 to 107; these read IFVYLVISLLLSLILIGVSFL, LVSILFIIFDLEVTFLFPWAV, and IGLFGFWSMMVFLFILTIGFV.

This sequence belongs to the complex I subunit 3 family.

It localises to the mitochondrion membrane. The enzyme catalyses a ubiquinone + NADH + 5 H(+)(in) = a ubiquinol + NAD(+) + 4 H(+)(out). Its function is as follows. Core subunit of the mitochondrial membrane respiratory chain NADH dehydrogenase (Complex I) that is believed to belong to the minimal assembly required for catalysis. Complex I functions in the transfer of electrons from NADH to the respiratory chain. The immediate electron acceptor for the enzyme is believed to be ubiquinone. This Marchantia polymorpha (Common liverwort) protein is NADH-ubiquinone oxidoreductase chain 3 (ND3).